The sequence spans 509 residues: uncharacterized protein (509 aa).

Its subcellular location is the virion. This is an uncharacterized protein from Acanthamoeba polyphaga mimivirus (APMV).